Reading from the N-terminus, the 436-residue chain is Probable cinnamyl alcohol dehydrogenase 8B (436 aa).

Position 120 (C120) interacts with Zn(2+). T122 provides a ligand contact to NADP(+). Zn(2+) contacts are provided by H142, E143, C173, C176, C179, C187, and C236. NADP(+) is bound by residues T240, 261–266 (GLGGLG), 284–289 (STSPGK), T324, G348, and 371–373 (NCV).

Belongs to the zinc-containing alcohol dehydrogenase family. As to quaternary structure, homodimer. It depends on Zn(2+) as a cofactor.

The enzyme catalyses (E)-cinnamyl alcohol + NADP(+) = (E)-cinnamaldehyde + NADPH + H(+). It carries out the reaction (E)-coniferol + NADP(+) = (E)-coniferaldehyde + NADPH + H(+). It catalyses the reaction (E)-sinapyl alcohol + NADP(+) = (E)-sinapaldehyde + NADPH + H(+). The catalysed reaction is (E)-4-coumaroyl alcohol + NADP(+) = (E)-4-coumaraldehyde + NADPH + H(+). The enzyme catalyses (E)-caffeyl alcohol + NADP(+) = (E)-caffeyl aldehyde + NADPH + H(+). The protein operates within aromatic compound metabolism; phenylpropanoid biosynthesis. Functionally, involved in lignin biosynthesis. Catalyzes the final step specific for the production of lignin monomers. Catalyzes the NADPH-dependent reduction of coniferaldehyde, 5-hydroxyconiferaldehyde, sinapaldehyde, 4-coumaraldehyde and caffeyl aldehyde to their respective alcohols. This Oryza sativa subsp. japonica (Rice) protein is Probable cinnamyl alcohol dehydrogenase 8B.